Reading from the N-terminus, the 57-residue chain is NADH dehydrogenase [ubiquinone] 1 beta subcomplex subunit 1 (57 aa).

The helical transmembrane segment at 10 to 26 (HWVHILVPAGFVFGCYL) threads the bilayer.

The protein belongs to the complex I NDUFB1 subunit family. In terms of assembly, complex I is composed of 45 different subunits.

It is found in the mitochondrion inner membrane. Functionally, accessory subunit of the mitochondrial membrane respiratory chain NADH dehydrogenase (Complex I) that is believed not to be involved in catalysis. Complex I functions in the transfer of electrons from NADH to the respiratory chain. The immediate electron acceptor for the enzyme is believed to be ubiquinone. In Mus musculus (Mouse), this protein is NADH dehydrogenase [ubiquinone] 1 beta subcomplex subunit 1 (Ndufb1).